Reading from the N-terminus, the 361-residue chain is Chorismate synthase (361 aa).

The NADP(+) site is built by Arg48 and Arg54. FMN-binding positions include 131–133 (RSS), 243–244 (NA), Gly287, 302–306 (KPTSS), and Arg328.

The protein belongs to the chorismate synthase family. In terms of assembly, homotetramer. FMNH2 is required as a cofactor.

The catalysed reaction is 5-O-(1-carboxyvinyl)-3-phosphoshikimate = chorismate + phosphate. The protein operates within metabolic intermediate biosynthesis; chorismate biosynthesis; chorismate from D-erythrose 4-phosphate and phosphoenolpyruvate: step 7/7. Its function is as follows. Catalyzes the anti-1,4-elimination of the C-3 phosphate and the C-6 proR hydrogen from 5-enolpyruvylshikimate-3-phosphate (EPSP) to yield chorismate, which is the branch point compound that serves as the starting substrate for the three terminal pathways of aromatic amino acid biosynthesis. This reaction introduces a second double bond into the aromatic ring system. This is Chorismate synthase from Bradyrhizobium sp. (strain BTAi1 / ATCC BAA-1182).